The following is a 399-amino-acid chain: Elongation factor Tu (399 aa).

Residues 10 to 204 enclose the tr-type G domain; sequence KPHVNIGTIG…AVDASIPEPE (195 aa). Residues 19–26 form a G1 region; sequence GHVDHGKT. Position 19-26 (19-26) interacts with GTP; the sequence is GHVDHGKT. Thr-26 lines the Mg(2+) pocket. A G2 region spans residues 60–64; that stretch reads GITIN. Residues 81-84 are G3; it reads DCPG. Residues 81–85 and 136–139 contribute to the GTP site; these read DCPGH and NKCD. The segment at 136–139 is G4; it reads NKCD. Residues 174 to 176 are G5; it reads SGL.

It belongs to the TRAFAC class translation factor GTPase superfamily. Classic translation factor GTPase family. EF-Tu/EF-1A subfamily. As to quaternary structure, monomer.

It is found in the cytoplasm. The enzyme catalyses GTP + H2O = GDP + phosphate + H(+). In terms of biological role, GTP hydrolase that promotes the GTP-dependent binding of aminoacyl-tRNA to the A-site of ribosomes during protein biosynthesis. In Synechococcus sp. (strain CC9311), this protein is Elongation factor Tu.